Reading from the N-terminus, the 603-residue chain is Elongation factor 4 (603 aa).

The region spanning 7 to 189 (SRLRNFCIIA…AVVDRIPSPK (183 aa)) is the tr-type G domain. Residues 19–24 (DHGKST) and 136–139 (NKVD) contribute to the GTP site.

Belongs to the TRAFAC class translation factor GTPase superfamily. Classic translation factor GTPase family. LepA subfamily.

The protein localises to the cell inner membrane. The catalysed reaction is GTP + H2O = GDP + phosphate + H(+). Functionally, required for accurate and efficient protein synthesis under certain stress conditions. May act as a fidelity factor of the translation reaction, by catalyzing a one-codon backward translocation of tRNAs on improperly translocated ribosomes. Back-translocation proceeds from a post-translocation (POST) complex to a pre-translocation (PRE) complex, thus giving elongation factor G a second chance to translocate the tRNAs correctly. Binds to ribosomes in a GTP-dependent manner. This chain is Elongation factor 4, found in Prochlorococcus marinus (strain NATL1A).